Here is a 576-residue protein sequence, read N- to C-terminus: Arginine--tRNA ligase (576 aa).

Residues 128–136 carry the 'HIGH' region motif; sequence PTGPMHIGH.

It belongs to the class-I aminoacyl-tRNA synthetase family. Monomer.

It is found in the cytoplasm. The catalysed reaction is tRNA(Arg) + L-arginine + ATP = L-arginyl-tRNA(Arg) + AMP + diphosphate. The polypeptide is Arginine--tRNA ligase (Rickettsia conorii (strain ATCC VR-613 / Malish 7)).